A 1343-amino-acid chain; its full sequence is DNA-directed RNA polymerase subunit beta (1343 aa).

The protein belongs to the RNA polymerase beta chain family. As to quaternary structure, the RNAP catalytic core consists of 2 alpha, 1 beta, 1 beta' and 1 omega subunit. When a sigma factor is associated with the core the holoenzyme is formed, which can initiate transcription.

It carries out the reaction RNA(n) + a ribonucleoside 5'-triphosphate = RNA(n+1) + diphosphate. Its function is as follows. DNA-dependent RNA polymerase catalyzes the transcription of DNA into RNA using the four ribonucleoside triphosphates as substrates. This is DNA-directed RNA polymerase subunit beta from Buchnera aphidicola subsp. Cinara cedri (strain Cc).